Reading from the N-terminus, the 309-residue chain is Probable pyridoxal 5'-phosphate synthase subunit PDX1 (309 aa).

A D-ribose 5-phosphate-binding site is contributed by aspartate 40. The Schiff-base intermediate with D-ribose 5-phosphate role is filled by lysine 97. A D-ribose 5-phosphate-binding site is contributed by glycine 169. Arginine 181 is a binding site for D-glyceraldehyde 3-phosphate. D-ribose 5-phosphate-binding positions include glycine 230 and glycine 251–serine 252.

It belongs to the PdxS/SNZ family.

It catalyses the reaction aldehydo-D-ribose 5-phosphate + D-glyceraldehyde 3-phosphate + L-glutamine = pyridoxal 5'-phosphate + L-glutamate + phosphate + 3 H2O + H(+). It functions in the pathway cofactor biosynthesis; pyridoxal 5'-phosphate biosynthesis. Functionally, catalyzes the formation of pyridoxal 5'-phosphate from ribose 5-phosphate (RBP), glyceraldehyde 3-phosphate (G3P) and ammonia. The ammonia is provided by PDX2. Can also use ribulose 5-phosphate and dihydroxyacetone phosphate as substrates, resulting from enzyme-catalyzed isomerization of RBP and G3P, respectively. Also plays an indirect role in resistance to singlet oxygen-generating photosensitizers. This is Probable pyridoxal 5'-phosphate synthase subunit PDX1 (PDX1) from Hevea brasiliensis (Para rubber tree).